Here is a 166-residue protein sequence, read N- to C-terminus: HTH-type transcriptional regulator PrsX (166 aa).

The HTH marR-type domain occupies 25 to 159 (EHLLMQLCIR…FEVINKKLLA (135 aa)).

It localises to the cytoplasm. This is HTH-type transcriptional regulator PrsX (prsX) from Escherichia coli O6:H1 (strain CFT073 / ATCC 700928 / UPEC).